Reading from the N-terminus, the 77-residue chain is Sec-independent protein translocase protein TatA (77 aa).

The chain crosses the membrane as a helical span at residues 1–21; that stretch reads MGSFSIWHWLIVLVIVMLVFG. The segment at 40–77 is disordered; the sequence is KDGMKEGNTDEPATPTPAKELRDSTTIDVEAKEKSRQQ. Residues 58 to 77 are compositionally biased toward basic and acidic residues; it reads KELRDSTTIDVEAKEKSRQQ.

Belongs to the TatA/E family. In terms of assembly, the Tat system comprises two distinct complexes: a TatABC complex, containing multiple copies of TatA, TatB and TatC subunits, and a separate TatA complex, containing only TatA subunits. Substrates initially bind to the TatABC complex, which probably triggers association of the separate TatA complex to form the active translocon.

It is found in the cell inner membrane. In terms of biological role, part of the twin-arginine translocation (Tat) system that transports large folded proteins containing a characteristic twin-arginine motif in their signal peptide across membranes. TatA could form the protein-conducting channel of the Tat system. The polypeptide is Sec-independent protein translocase protein TatA (Cupriavidus metallidurans (strain ATCC 43123 / DSM 2839 / NBRC 102507 / CH34) (Ralstonia metallidurans)).